Here is a 394-residue protein sequence, read N- to C-terminus: Bone morphogenetic protein 15 (394 aa).

A signal peptide spans 1 to 18 (MVLLSILRILLLWGLVLF). Positions 19 to 269 (MEHRVQMTQV…DPSLLLRRAR (251 aa)) are excised as a propeptide. N-linked (GlcNAc...) asparagine glycans are attached at residues Asn-87 and Asn-238. Intrachain disulfides connect Cys-293–Cys-359, Cys-322–Cys-391, and Cys-326–Cys-393. Asn-375 is a glycosylation site (N-linked (GlcNAc...) asparagine).

This sequence belongs to the TGF-beta family. In terms of assembly, homodimer or heterodimer (Potential). But, in contrast to other members of this family, cannot be disulfide-linked.

The protein resides in the secreted. May be involved in follicular development. Seems to be an oocyte-specific growth/differentiation factor that stimulates folliculogenesis and granulosa cell (GC) growth. In Bos taurus (Bovine), this protein is Bone morphogenetic protein 15 (BMP15).